The sequence spans 187 residues: Elongation factor P (187 aa).

This sequence belongs to the elongation factor P family.

Its subcellular location is the cytoplasm. It functions in the pathway protein biosynthesis; polypeptide chain elongation. Involved in peptide bond synthesis. Stimulates efficient translation and peptide-bond synthesis on native or reconstituted 70S ribosomes in vitro. Probably functions indirectly by altering the affinity of the ribosome for aminoacyl-tRNA, thus increasing their reactivity as acceptors for peptidyl transferase. This chain is Elongation factor P, found in Rhodospirillum rubrum (strain ATCC 11170 / ATH 1.1.1 / DSM 467 / LMG 4362 / NCIMB 8255 / S1).